The primary structure comprises 501 residues: Ribose import ATP-binding protein RbsA (501 aa).

2 ABC transporter domains span residues 5 to 241 (LELK…VGRK) and 249 to 495 (LNLP…VGKQ). 37-44 (GENGAGKS) provides a ligand contact to ATP.

The protein belongs to the ABC transporter superfamily. Ribose importer (TC 3.A.1.2.1) family. As to quaternary structure, the complex is composed of an ATP-binding protein (RbsA), two transmembrane proteins (RbsC) and a solute-binding protein (RbsB).

It localises to the cell inner membrane. It carries out the reaction D-ribose(out) + ATP + H2O = D-ribose(in) + ADP + phosphate + H(+). Part of the ABC transporter complex RbsABC involved in ribose import. Responsible for energy coupling to the transport system. The chain is Ribose import ATP-binding protein RbsA from Photorhabdus laumondii subsp. laumondii (strain DSM 15139 / CIP 105565 / TT01) (Photorhabdus luminescens subsp. laumondii).